A 709-amino-acid chain; its full sequence is MSINEEEYLRLEEEIDLGDIDFTDLEEQYEADLGYDNYVIVDGAPIAPEAKVPILIKVLRKLFSTAGEIVEGDEGIFMPMENGKSKGFLFIQYKNVADADTAIKKLNGKKLDAQHRLLVNRLSDIEKYGSVSGEFKEPEIEPFQSHGFLQSWLQDEQGKDQIVLHFNESVGVYWNKKTSEPEPVIEPRRGFTSKYAKFSPKGTYLFSIHPQGIQAWGGADFHRIKRFFHNQVRLVDFSPNEKYMVTLSPLPITLPDSTAERAQFPFGPESEGHKLVIWDMETGEPARTFALPPHLENQKEMQWPLVKWSFDDKYCARQGPDALAIYETPSFQLLEKKLVKIDGIQEFEWAPAGVKLHNSKEANEHLLSYWTPESANQTARVAIMQIPSRQVLRTVNLFQVSDCKMHWQSEGKLLCVKVDRHTKSGKTLFSNLDFFKVTERDIPVEKLELKDVIVNFSWEPKSERFVTISRLDDGNPNPAIPKNSITFYAVEEGKGKNANSKYKAYKQIENKHSNTVFWSPKGRYVAVATISRSSGEIEFYDVSFDDETSKKAAPANVKLLKTDKYSGMTNIAWDPSGRFLAAWSSSWLHTIENGYRIYEFTGNLLRDDSVDQFKEFIWRPRPESLLTSSDRKKVRSNLREYSAQFEEFDAMEADAAVREAILARRKALEDWRAYRAKHAGKKVQTSKVQAEVIEEIKEEIVEEKEEIVE.

A sufficient for interaction with HCR1 and TIF32 region spans residues 1–98 (MSINEEEYLR…LFIQYKNVAD (98 aa)). A sufficient for interaction with PIC8 region spans residues 1–221 (MSINEEEYLR…GIQAWGGADF (221 aa)). One can recognise an RRM domain in the interval 37–124 (NYVIVDGAPI…HRLLVNRLSD (88 aa)).

Belongs to the eIF-3 subunit B family. As to quaternary structure, component of the eukaryotic translation initiation factor 3 (eIF-3) complex.

The protein resides in the cytoplasm. RNA-binding component of the eukaryotic translation initiation factor 3 (eIF-3) complex, which is involved in protein synthesis of a specialized repertoire of mRNAs and, together with other initiation factors, stimulates binding of mRNA and methionyl-tRNAi to the 40S ribosome. The eIF-3 complex specifically targets and initiates translation of a subset of mRNAs involved in cell proliferation. In Lodderomyces elongisporus (strain ATCC 11503 / CBS 2605 / JCM 1781 / NBRC 1676 / NRRL YB-4239) (Yeast), this protein is Eukaryotic translation initiation factor 3 subunit B.